Reading from the N-terminus, the 150-residue chain is MKCPFCAFADSKVVDSRPDKEGSTIRRRRECESCSKRFTTHERVEEILPLVIKKDGRREPFDRMKLVAGVMKACEKRPVSVETIERLIDRLEVQMQESGEKEIPSKSLGEWVMTELHAIDQVAYVRFASVYRSFKDITEFMSELQELLKK.

Residues 3–34 fold into a zinc finger; the sequence is CPFCAFADSKVVDSRPDKEGSTIRRRRECESC. Positions 49–139 constitute an ATP-cone domain; the sequence is PLVIKKDGRR…VYRSFKDITE (91 aa).

It belongs to the NrdR family. Zn(2+) is required as a cofactor.

Negatively regulates transcription of bacterial ribonucleotide reductase nrd genes and operons by binding to NrdR-boxes. The protein is Transcriptional repressor NrdR of Geotalea daltonii (strain DSM 22248 / JCM 15807 / FRC-32) (Geobacter daltonii).